The sequence spans 157 residues: Endoribonuclease YbeY (157 aa).

Zn(2+) is bound by residues histidine 122, histidine 126, and histidine 132.

The protein belongs to the endoribonuclease YbeY family. The cofactor is Zn(2+).

Its subcellular location is the cytoplasm. In terms of biological role, single strand-specific metallo-endoribonuclease involved in late-stage 70S ribosome quality control and in maturation of the 3' terminus of the 16S rRNA. This chain is Endoribonuclease YbeY, found in Lysinibacillus sphaericus (strain C3-41).